Reading from the N-terminus, the 362-residue chain is Large ribosomal subunit protein uL3 (362 aa).

Residues 340-362 (RPPKKKPPVQRPQITYVSVESKQ) form a disordered region. Residues 351–362 (PQITYVSVESKQ) are compositionally biased toward polar residues.

The protein belongs to the universal ribosomal protein uL3 family. Part of the 50S ribosomal subunit. Forms a cluster with proteins L14 and L24e.

Its function is as follows. One of the primary rRNA binding proteins, it binds directly near the 3'-end of the 23S rRNA, where it nucleates assembly of the 50S subunit. This chain is Large ribosomal subunit protein uL3, found in Pyrococcus horikoshii (strain ATCC 700860 / DSM 12428 / JCM 9974 / NBRC 100139 / OT-3).